A 287-amino-acid chain; its full sequence is Ethylene-inducing xylanase 3 (287 aa).

Positions 1–19 (MVCFSSLFVAASAIAVVFA) are cleaved as a signal peptide. A GH11 domain is found at 31–219 (QSTPSSQGTH…SSGSARINVA (189 aa)). The Nucleophile role is filled by E115. The Proton donor role is filled by E206. In terms of domain architecture, CBM1 spans 252-287 (SCAARWGQCGGSGWNGATCCSAGTCQAQNQWYSQCL).

Belongs to the glycosyl hydrolase 11 (cellulase G) family.

The enzyme catalyses Endohydrolysis of (1-&gt;4)-beta-D-xylosidic linkages in xylans.. It functions in the pathway glycan degradation; xylan degradation. Its function is as follows. Endo-1,4-beta-xylanase involved in the hydrolysis of xylan, a major structural heterogeneous polysaccharide found in plant biomass representing the second most abundant polysaccharide in the biosphere, after cellulose. Exhibits immunity-inducing activity and induces cell death in Nicotiana benthamiana. This is Ethylene-inducing xylanase 3 from Verticillium longisporum (Verticillium dahliae var. longisporum).